A 701-amino-acid polypeptide reads, in one-letter code: DNA-directed RNA polymerase subunit beta' (701 aa).

4 residues coordinate Zn(2+): cysteine 76, cysteine 78, cysteine 94, and cysteine 97. Mg(2+) contacts are provided by aspartate 511, aspartate 513, and aspartate 515.

The protein belongs to the RNA polymerase beta' chain family. RpoC1 subfamily. In plastids the minimal PEP RNA polymerase catalytic core is composed of four subunits: alpha, beta, beta', and beta''. When a (nuclear-encoded) sigma factor is associated with the core the holoenzyme is formed, which can initiate transcription. Mg(2+) is required as a cofactor. Requires Zn(2+) as cofactor.

Its subcellular location is the plastid. The protein localises to the chloroplast. It carries out the reaction RNA(n) + a ribonucleoside 5'-triphosphate = RNA(n+1) + diphosphate. Its function is as follows. DNA-dependent RNA polymerase catalyzes the transcription of DNA into RNA using the four ribonucleoside triphosphates as substrates. This Pelargonium hortorum (Common geranium) protein is DNA-directed RNA polymerase subunit beta'.